Consider the following 235-residue polypeptide: MGARERLIVGLDVPTIGEAERLVSTLGDDILFYKIGYQLVFAGGLEFARDLAASGKKIFLDMKLLDIDNTVASGVENIAKMGMSMLTLHAYPKAMKAAVEAAAGSGLCLLGVTVLTSMDADDLAEAGYSQDPHSLVLRRAGQARAAGMGGIVCSAEEAAAVREIVGPDMAIVTPGIRPDGSDKGDQKRVMTPFDALKAGATHLVVGRPIVKAPDPRDAARAILSEMVSALWPANR.

Residues aspartate 12, lysine 34, 61–70 (DMKLLDIDNT), threonine 116, arginine 177, glutamine 186, glycine 206, and arginine 207 each bind substrate. Lysine 63 functions as the Proton donor in the catalytic mechanism.

This sequence belongs to the OMP decarboxylase family. Type 1 subfamily. In terms of assembly, homodimer.

It catalyses the reaction orotidine 5'-phosphate + H(+) = UMP + CO2. Its pathway is pyrimidine metabolism; UMP biosynthesis via de novo pathway; UMP from orotate: step 2/2. Functionally, catalyzes the decarboxylation of orotidine 5'-monophosphate (OMP) to uridine 5'-monophosphate (UMP). The chain is Orotidine 5'-phosphate decarboxylase from Rhizobium johnstonii (strain DSM 114642 / LMG 32736 / 3841) (Rhizobium leguminosarum bv. viciae).